The following is a 715-amino-acid chain: Phosphoribosylformylglycinamidine synthase subunit PurL (715 aa).

Residue H33 is part of the active site. Y36 provides a ligand contact to ATP. Residue E77 coordinates Mg(2+). Substrate contacts are provided by residues S78–H81 and R100. H79 acts as the Proton acceptor in catalysis. A Mg(2+)-binding site is contributed by D101. A substrate-binding site is contributed by Q225. Residue D253 coordinates Mg(2+). Position 297-299 (E297–Q299) interacts with substrate. Residues N475 and G512 each contribute to the ATP site. Residue N513 participates in Mg(2+) binding. S515 provides a ligand contact to substrate.

It belongs to the FGAMS family. Monomer. Part of the FGAM synthase complex composed of 1 PurL, 1 PurQ and 2 PurS subunits.

It is found in the cytoplasm. The catalysed reaction is N(2)-formyl-N(1)-(5-phospho-beta-D-ribosyl)glycinamide + L-glutamine + ATP + H2O = 2-formamido-N(1)-(5-O-phospho-beta-D-ribosyl)acetamidine + L-glutamate + ADP + phosphate + H(+). Its pathway is purine metabolism; IMP biosynthesis via de novo pathway; 5-amino-1-(5-phospho-D-ribosyl)imidazole from N(2)-formyl-N(1)-(5-phospho-D-ribosyl)glycinamide: step 1/2. In terms of biological role, part of the phosphoribosylformylglycinamidine synthase complex involved in the purines biosynthetic pathway. Catalyzes the ATP-dependent conversion of formylglycinamide ribonucleotide (FGAR) and glutamine to yield formylglycinamidine ribonucleotide (FGAM) and glutamate. The FGAM synthase complex is composed of three subunits. PurQ produces an ammonia molecule by converting glutamine to glutamate. PurL transfers the ammonia molecule to FGAR to form FGAM in an ATP-dependent manner. PurS interacts with PurQ and PurL and is thought to assist in the transfer of the ammonia molecule from PurQ to PurL. The polypeptide is Phosphoribosylformylglycinamidine synthase subunit PurL (Methanosarcina acetivorans (strain ATCC 35395 / DSM 2834 / JCM 12185 / C2A)).